We begin with the raw amino-acid sequence, 153 residues long: Large ribosomal subunit protein uL13 (153 aa).

It belongs to the universal ribosomal protein uL13 family. Part of the 50S ribosomal subunit.

In terms of biological role, this protein is one of the early assembly proteins of the 50S ribosomal subunit, although it is not seen to bind rRNA by itself. It is important during the early stages of 50S assembly. The chain is Large ribosomal subunit protein uL13 from Xanthobacter autotrophicus (strain ATCC BAA-1158 / Py2).